A 410-amino-acid chain; its full sequence is Riboflavin biosynthesis protein RibBA (410 aa).

Residues 1–205 (MENKRIDTIE…IKDLVAFQMR (205 aa)) are DHBP synthase. Residues 30-31 (RE), aspartate 35, 144-148 (RVGHT), and glutamate 168 contribute to the D-ribulose 5-phosphate site. Position 31 (glutamate 31) interacts with Mg(2+). Histidine 147 contributes to the Mg(2+) binding site. The tract at residues 206–410 (RSKLVQRAVE…ISCSCGSGNH (205 aa)) is GTP cyclohydrolase II. 256–260 (RVHSQ) is a binding site for GTP. Positions 261, 272, and 274 each coordinate Zn(2+). GTP contacts are provided by residues glutamine 277, 299 to 301 (EGR), and threonine 321. Residue aspartate 333 is the Proton acceptor; for GTP cyclohydrolase activity of the active site. The active-site Nucleophile; for GTP cyclohydrolase activity is the arginine 335. GTP contacts are provided by threonine 356 and lysine 361.

This sequence in the N-terminal section; belongs to the DHBP synthase family. In the C-terminal section; belongs to the GTP cyclohydrolase II family. Mg(2+) serves as cofactor. The cofactor is Mn(2+). Zn(2+) is required as a cofactor.

It carries out the reaction D-ribulose 5-phosphate = (2S)-2-hydroxy-3-oxobutyl phosphate + formate + H(+). The enzyme catalyses GTP + 4 H2O = 2,5-diamino-6-hydroxy-4-(5-phosphoribosylamino)-pyrimidine + formate + 2 phosphate + 3 H(+). The protein operates within cofactor biosynthesis; riboflavin biosynthesis; 2-hydroxy-3-oxobutyl phosphate from D-ribulose 5-phosphate: step 1/1. It functions in the pathway cofactor biosynthesis; riboflavin biosynthesis; 5-amino-6-(D-ribitylamino)uracil from GTP: step 1/4. Its function is as follows. Catalyzes the conversion of D-ribulose 5-phosphate to formate and 3,4-dihydroxy-2-butanone 4-phosphate. In terms of biological role, catalyzes the conversion of GTP to 2,5-diamino-6-ribosylamino-4(3H)-pyrimidinone 5'-phosphate (DARP), formate and pyrophosphate. This Chlorobium phaeovibrioides (strain DSM 265 / 1930) (Prosthecochloris vibrioformis (strain DSM 265)) protein is Riboflavin biosynthesis protein RibBA.